The chain runs to 268 residues: Eukaryotic translation initiation factor 3 subunit J (268 aa).

3 disordered regions span residues 1–27 (MSWD…DDEF), 40–63 (DAEE…KVDK), and 217–249 (LAKV…KKDQ). Residues 47–58 (QKQKPKAAPKAA) show a composition bias toward basic residues. Residues 191–221 (IESIRQTVATLNVLIKEKERQERQARLAKVK) adopt a coiled-coil conformation.

It belongs to the eIF-3 subunit J family. In terms of assembly, component of the eukaryotic translation initiation factor 3 (eIF-3) complex.

It is found in the cytoplasm. Component of the eukaryotic translation initiation factor 3 (eIF-3) complex, which is involved in protein synthesis of a specialized repertoire of mRNAs and, together with other initiation factors, stimulates binding of mRNA and methionyl-tRNAi to the 40S ribosome. The eIF-3 complex specifically targets and initiates translation of a subset of mRNAs involved in cell proliferation. This Eremothecium gossypii (strain ATCC 10895 / CBS 109.51 / FGSC 9923 / NRRL Y-1056) (Yeast) protein is Eukaryotic translation initiation factor 3 subunit J.